A 242-amino-acid polypeptide reads, in one-letter code: Small ribosomal subunit protein uS2 (242 aa).

This sequence belongs to the universal ribosomal protein uS2 family.

The sequence is that of Small ribosomal subunit protein uS2 from Shewanella oneidensis (strain ATCC 700550 / JCM 31522 / CIP 106686 / LMG 19005 / NCIMB 14063 / MR-1).